The following is a 564-amino-acid chain: Probable diguanylate cyclase DgcQ (564 aa).

2 consecutive transmembrane segments (helical) span residues 20-40 (LGPG…STLL) and 360-380 (IALT…WYVI). The GGDEF domain occupies 428 to 563 (HPFSVIQVDL…GRNRVFASDN (136 aa)). A Mg(2+)-binding site is contributed by Asp436. The substrate site is built by Asn444, His449, and Asp453. Glu479 serves as a coordination point for Mg(2+). Glu479 serves as the catalytic Proton acceptor.

In terms of assembly, homodimer. Mg(2+) is required as a cofactor.

The protein localises to the cell inner membrane. It carries out the reaction 2 GTP = 3',3'-c-di-GMP + 2 diphosphate. It functions in the pathway glycan metabolism; bacterial cellulose biosynthesis. It participates in purine metabolism; 3',5'-cyclic di-GMP biosynthesis. Functionally, catalyzes the synthesis of cyclic-di-GMP (c-di-GMP) via the condensation of 2 GTP molecules. Cyclic-di-GMP is a second messenger which controls cell surface-associated traits in bacteria. Involved in the regulation of cellulose production. The sequence is that of Probable diguanylate cyclase DgcQ from Escherichia coli O157:H7.